The chain runs to 1380 residues: Tripeptidyl-peptidase 2 (1380 aa).

The region spanning 110-619 (STFIASLMPK…QGLMQVDKAY (510 aa)) is the Peptidase S8 domain. Residues aspartate 145, histidine 372, and serine 558 each act as charge relay system in the active site. The interval 1099–1143 (DEKEGKNPKDNPVSYPISYVVPPNKPEEDKKAASAPTCSKSVSER) is disordered. Over residues 1110 to 1120 (PVSYPISYVVP) the composition is skewed to low complexity. Coiled coils occupy residues 1152-1181 (KIKF…KSEY) and 1238-1300 (EDDE…ELTK).

This sequence belongs to the peptidase S8 family. Assembles into a large oligomeric complex containing two related proteins 153 and 142 kDa that are derived from the single TPP2 gene. The 142 kDa form mainly differs from the 153 kDa form by a truncation at the C-terminal end.

The enzyme catalyses Release of an N-terminal tripeptide from a polypeptide.. With respect to regulation, inhibited by alanine-alanine-phenylalanine-chloromethylketone, butabindide and phenylmethanesulfonyl fluoride (PMSF), but not by leupeptin, N-ethylmaleimide, EDTA, MG132 and lactacystin. Its function is as follows. Serine protease of the proteasome pathway that may function with the 20S proteasome to degrade oxidized proteins generated by environmental stress. In Arabidopsis thaliana (Mouse-ear cress), this protein is Tripeptidyl-peptidase 2 (TPP2).